Consider the following 374-residue polypeptide: Alanine racemase (374 aa).

K34 functions as the Proton acceptor; specific for D-alanine in the catalytic mechanism. Position 34 is an N6-(pyridoxal phosphate)lysine (K34). R138 lines the substrate pocket. Y265 acts as the Proton acceptor; specific for L-alanine in catalysis. Residue M313 participates in substrate binding.

The protein belongs to the alanine racemase family. Pyridoxal 5'-phosphate serves as cofactor.

The enzyme catalyses L-alanine = D-alanine. The protein operates within amino-acid biosynthesis; D-alanine biosynthesis; D-alanine from L-alanine: step 1/1. Functionally, catalyzes the interconversion of L-alanine and D-alanine. May also act on other amino acids. This is Alanine racemase (alr) from Hahella chejuensis (strain KCTC 2396).